The primary structure comprises 260 residues: Cytochrome c oxidase subunit 3 (260 aa).

6 helical membrane-spanning segments follow: residues Leu-41 to Ile-61, Gly-81 to Phe-101, Thr-133 to Gly-153, Ala-161 to Ile-181, Phe-196 to Val-216, and Ala-238 to Trp-258.

This sequence belongs to the cytochrome c oxidase subunit 3 family. As to quaternary structure, component of the cytochrome c oxidase (complex IV, CIV), a multisubunit enzyme composed of a catalytic core of 3 subunits and several supernumerary subunits. The complex exists as a monomer or a dimer and forms supercomplexes (SCs) in the inner mitochondrial membrane with ubiquinol-cytochrome c oxidoreductase (cytochrome b-c1 complex, complex III, CIII).

It localises to the mitochondrion inner membrane. It catalyses the reaction 4 Fe(II)-[cytochrome c] + O2 + 8 H(+)(in) = 4 Fe(III)-[cytochrome c] + 2 H2O + 4 H(+)(out). In terms of biological role, component of the cytochrome c oxidase, the last enzyme in the mitochondrial electron transport chain which drives oxidative phosphorylation. The respiratory chain contains 3 multisubunit complexes succinate dehydrogenase (complex II, CII), ubiquinol-cytochrome c oxidoreductase (cytochrome b-c1 complex, complex III, CIII) and cytochrome c oxidase (complex IV, CIV), that cooperate to transfer electrons derived from NADH and succinate to molecular oxygen, creating an electrochemical gradient over the inner membrane that drives transmembrane transport and the ATP synthase. Cytochrome c oxidase is the component of the respiratory chain that catalyzes the reduction of oxygen to water. Electrons originating from reduced cytochrome c in the intermembrane space (IMS) are transferred via the dinuclear copper A center (CU(A)) of subunit 2 and heme A of subunit 1 to the active site in subunit 1, a binuclear center (BNC) formed by heme A3 and copper B (CU(B)). The BNC reduces molecular oxygen to 2 water molecules using 4 electrons from cytochrome c in the IMS and 4 protons from the mitochondrial matrix. In Strongylocentrotus purpuratus (Purple sea urchin), this protein is Cytochrome c oxidase subunit 3 (COIII).